Here is a 262-residue protein sequence, read N- to C-terminus: MLDPIAIQLGPLAIRWYALCIVTGLILAVYLTMKEAPRKKIIPDDILDFILVAFPLAILGARLYYVIFRFDYYSQNLGEIFAIWNGGLAIYGGLITGALVLYIFADRKLINTWDFLDIAAPSVMIAQSLGRWGNFFNQEAYGATVDNLDYLPGFIRDQMYIEGSYRQPTFLYESLWNLLGFALILIFRRKWKSLRRGHITAFYLIWYGFGRMVIEGMRTDSLMFFGLRVSQWLSVVFIGLGIMIVIYQNRKKAPYYITEEEK.

4 helical membrane-spanning segments follow: residues 9 to 29, 41 to 61, 80 to 100, and 109 to 129; these read LGPL…ILAV, IIPD…ILGA, IFAI…GALV, and LINT…AQSL. Arg-131 lines the a 1,2-diacyl-sn-glycero-3-phospho-(1'-sn-glycerol) pocket. 3 consecutive transmembrane segments (helical) span residues 167 to 187, 197 to 217, and 226 to 246; these read QPTF…ILIF, GHIT…IEGM, and GLRV…MIVI.

The protein belongs to the Lgt family.

It localises to the cell membrane. The catalysed reaction is L-cysteinyl-[prolipoprotein] + a 1,2-diacyl-sn-glycero-3-phospho-(1'-sn-glycerol) = an S-1,2-diacyl-sn-glyceryl-L-cysteinyl-[prolipoprotein] + sn-glycerol 1-phosphate + H(+). Its pathway is protein modification; lipoprotein biosynthesis (diacylglyceryl transfer). Functionally, catalyzes the transfer of the diacylglyceryl group from phosphatidylglycerol to the sulfhydryl group of the N-terminal cysteine of a prolipoprotein, the first step in the formation of mature lipoproteins. This Streptococcus pneumoniae (strain ATCC 700669 / Spain 23F-1) protein is Phosphatidylglycerol--prolipoprotein diacylglyceryl transferase.